The following is a 162-amino-acid chain: uncharacterized protein (162 aa).

3 helical membrane passes run Leu7–Leu27, Leu51–Gly71, and Thr134–Gly154.

It belongs to the DedA family.

The protein localises to the cell membrane. This is an uncharacterized protein from Bacillus subtilis (strain 168).